A 381-amino-acid polypeptide reads, in one-letter code: Cytochrome b (381 aa).

The next 4 membrane-spanning stretches (helical) occupy residues 34-54 (FGSLLGLCLIIQILTGLFLAM), 78-99 (WLIRNIHANGASLFFICVYLHI), 114-134 (WNIGVILLFLLMATAFVGYVL), and 179-199 (FFAFHFLLPFLIVGLTLIHLL). The heme b site is built by histidine 84 and histidine 98. Heme b-binding residues include histidine 183 and histidine 197. Histidine 202 serves as a coordination point for a ubiquinone. A run of 4 helical transmembrane segments spans residues 227–247 (YKDLLGFFLMIILLALLALFL), 289–309 (LGGVLALLFSIFILMLIPMLH), 321–341 (MTQFLFWTLVANAIILTWIGG), and 348–368 (FILVGQIASVTYFSLFLIIIP).

It belongs to the cytochrome b family. The cytochrome bc1 complex contains 3 respiratory subunits (MT-CYB, CYC1 and UQCRFS1), 2 core proteins (UQCRC1 and UQCRC2) and probably 6 low-molecular weight proteins. Heme b is required as a cofactor.

The protein localises to the mitochondrion inner membrane. Functionally, component of the ubiquinol-cytochrome c reductase complex (complex III or cytochrome b-c1 complex) that is part of the mitochondrial respiratory chain. The b-c1 complex mediates electron transfer from ubiquinol to cytochrome c. Contributes to the generation of a proton gradient across the mitochondrial membrane that is then used for ATP synthesis. The polypeptide is Cytochrome b (mt-cyb) (Squalus acanthias (Spiny dogfish)).